Here is a 1073-residue protein sequence, read N- to C-terminus: PX domain-containing protein LEC1 (1073 aa).

Basic and acidic residues predominate over residues 218 to 228 (CTESVDNDKSS). Positions 218 to 240 (CTESVDNDKSSKSTPTSSPKSHA) are disordered. Residues 229-238 (KSTPTSSPKS) are compositionally biased toward low complexity. The PX domain occupies 273-506 (LFSKLSLGVP…RFFLSGPNLD (234 aa)). Phosphoserine is present on residues S310 and S451. Positions 431-456 (IKEEDNIDEDEYEEEGEGEESDFDEY) are disordered. The span at 432 to 453 (KEEDNIDEDEYEEEGEGEESDF) shows a compositional bias: acidic residues.

The protein resides in the endoplasmic reticulum membrane. It is found in the lipid droplet. Phosphoinositide-binding protein that plays a role in regulation of ergosterol distribution in the cell. Facilitates ergosterol transport between plasma membrane and lipid droplets. The polypeptide is PX domain-containing protein LEC1 (Saccharomyces cerevisiae (strain ATCC 204508 / S288c) (Baker's yeast)).